The sequence spans 343 residues: Ribosomal RNA small subunit methyltransferase C (343 aa).

This sequence belongs to the methyltransferase superfamily. RsmC family. Monomer.

The protein resides in the cytoplasm. The catalysed reaction is guanosine(1207) in 16S rRNA + S-adenosyl-L-methionine = N(2)-methylguanosine(1207) in 16S rRNA + S-adenosyl-L-homocysteine + H(+). In terms of biological role, specifically methylates the guanine in position 1207 of 16S rRNA in the 30S particle. The sequence is that of Ribosomal RNA small subunit methyltransferase C from Shigella flexneri.